The chain runs to 190 residues: Peptidyl-tRNA hydrolase (190 aa).

Residue Y14 coordinates tRNA. H19 serves as the catalytic Proton acceptor. TRNA is bound by residues Y64 and N66.

This sequence belongs to the PTH family. In terms of assembly, monomer.

The protein resides in the cytoplasm. The catalysed reaction is an N-acyl-L-alpha-aminoacyl-tRNA + H2O = an N-acyl-L-amino acid + a tRNA + H(+). In terms of biological role, hydrolyzes ribosome-free peptidyl-tRNAs (with 1 or more amino acids incorporated), which drop off the ribosome during protein synthesis, or as a result of ribosome stalling. Its function is as follows. Catalyzes the release of premature peptidyl moieties from peptidyl-tRNA molecules trapped in stalled 50S ribosomal subunits, and thus maintains levels of free tRNAs and 50S ribosomes. This is Peptidyl-tRNA hydrolase from Rhodopirellula baltica (strain DSM 10527 / NCIMB 13988 / SH1).